Consider the following 555-residue polypeptide: MSTSIGDNETGAIVSNENVEFSVDFRGNPSIRSSSGAWKSSGFTMCAEVAEKFAYFGIASNLITYFTEALGESTAVAASNVNLWLGTAAFLPLIWGSIADSFLGRFRTILLTSSFYIMGLGLLTFSATIPSLCNDQETRESCVSQVKVIIFFCALYLIALGEGGFKVCLRAFGADQFDEQDPNESKAKSSYFNWLYFAISIGILTTRLVTNYVQENLSWALGYAIPCLSMMLALFLFLLGIKTYRFSTGGEGRQGKKHDNPFVRIGRVFVAAARNRRQTPSDTCLLLPNESTKKFRFLDRAVISCDSYEVEEAKAVLSLIPIWLCSLVFGIVFAQSPTFFTKQGSTMDRSISSTLQVPAATLQCFISLAILVFIPIYDRLFVPIARSITRKPAGITTLQRISTGIFLSIISMVIAALVEMKRLKTARDHGLVDSPKATVPMSVCWLIPQYILFGVSDVFTMVGLQEFFYGEVPPQLRSMGLALYLSIIGIGNFLSSFMVSVIEEATSQSGQVSWFSNNLNQAHLDYFYWLLACLSSLAFIFTVYFAKSYLYNSPK.

A run of 2 helical transmembrane segments spans residues 53–73 and 83–103; these read FAYFGIASNLITYFTEALGES and LWLGTAAFLPLIWGSIADSFL. T108 bears the Phosphothreonine mark. Helical transmembrane passes span 109 to 129, 148 to 168, 190 to 210, 221 to 241, 315 to 335, 357 to 377, 401 to 421, 443 to 463, 482 to 502, and 526 to 546; these read ILLTSSFYIMGLGLLTFSATI, VIIFFCALYLIALGEGGFKVC, SYFNWLYFAISIGILTTRLVT, LGYAIPCLSMMLALFLFLLGI, AVLSLIPIWLCSLVFGIVFAQ, VPAATLQCFISLAILVFIPIY, ISTGIFLSIISMVIAALVEMK, VCWLIPQYILFGVSDVFTMVG, ALYLSIIGIGNFLSSFMVSVI, and YFYWLLACLSSLAFIFTVYFA.

It belongs to the major facilitator superfamily. Proton-dependent oligopeptide transporter (POT/PTR) (TC 2.A.17) family. As to expression, expressed in shoots and roots.

The protein localises to the membrane. This chain is Protein NRT1/ PTR FAMILY 5.12 (NPF5.12), found in Arabidopsis thaliana (Mouse-ear cress).